The chain runs to 1060 residues: Centrosomal protein of 131 kDa (1060 aa).

Positions 1–11 (MKGSRTITATP) are enriched in polar residues. Residues 1 to 96 (MKGSRTITAT…TGSPRPAEPT (96 aa)) are disordered. Residues 1–244 (MKGSRTITAT…SQSARGTTGL (244 aa)) are interaction with PLK4. Phosphoserine is present on residues serine 14 and serine 35. 2 stretches are compositionally biased toward polar residues: residues 32-50 (RPGS…SVAT) and 73-88 (LRRS…SWTG). Phosphoserine; by MAPKAPK2 is present on serine 47. Serine 78 is modified (phosphoserine; by MAPKAPK2 and PLK4). Phosphoserine is present on residues serine 89, serine 105, serine 114, serine 146, and serine 150. Disordered regions lie at residues 136 to 155 (LALP…LGPR) and 217 to 248 (EGGE…LRRR). Basic and acidic residues predominate over residues 217 to 226 (EGGEGSDLGK). Residues 263–283 (NQAAVTIQRWYRCQVQRRRAG) form the IQ domain. 2 stretches are compositionally biased toward basic and acidic residues: residues 314–327 (EEAA…EKAR) and 344–363 (KASE…RAPE). Residues 314 to 437 (EEAARKKARE…VSGSSRGKAR (124 aa)) are disordered. Low complexity predominate over residues 398–408 (ASESSPEQWQS). The segment covering 409 to 424 (PEDKPQDIHSQGEARQ) has biased composition (basic and acidic residues). Threonine 473 is subject to Phosphothreonine. The residue at position 481 (serine 481) is a Phosphoserine.

The protein belongs to the CEP131 family. Self-associates. Associates with the centriolar satellite BBSome protein complex Interacts with BBS4; the interaction limits BBS4 availability for association with the BBSome complex, and hence negatively regulates ciliary localization of the BBSome complex. Interacts with MIB1. Interacts with PCM1; the interaction increases in response to ultraviolet light (UV) radiation. Associates with microtubule; association to microtubule is reduced in response to cellular stress, such as UV stimulation, in a process that requires p38 MAP kinase signaling. Interacts with CEP290, DCTN1, MAP1LC3B, PCNT, PCM1 and CEP152. Interacts with 14-3-3 proteins following UV-induced phosphorylation by MAPKAPK2; this inhibits formation of novel centriolar satellites. Interacts with SDCCAG8. Interacts with CCDC61. Interacts with PLK4. Post-translationally, ubiquitinated. Undergoes monoubiquitination catalyzed by the E3 ubiquitin-protein ligase MIB1 in proliferating cells, preventing cilia formation. Monoubiquitination by MIB1 is inhibited in response to cellular stress, such as ultraviolet light (UV) radiation or heat shock, resulting in ciliogenesis restoration. MAPKAPK2-dependent phosphorylation at Ser-47 and Ser-78 occurs in response to cellular stress such as exposure to ultraviolet irradiation and promotes binding to 14-3-3 proteins which leads to cytoplasmic sequestration of CEP131 and blocks formation of new centriolar satellites. Phosphorylation at Ser-78 mediated by PLK4 is essential for proper organization and integrity of centriolar satellites but is dispensable for its localization to centrioles and its function in ciliogenesis. Localized to the pre-acrosome region of round and elongated spermatids in testis but also present in ovary, brain and adipose tissue.

The protein localises to the cytoplasm. It is found in the cytoskeleton. Its subcellular location is the microtubule organizing center. The protein resides in the centrosome. It localises to the centriolar satellite. The protein localises to the centriole. It is found in the cilium basal body. Its subcellular location is the cytoplasmic vesicle. The protein resides in the secretory vesicle. It localises to the acrosome. In terms of biological role, component of centriolar satellites contributing to the building of a complex and dynamic network required to regulate cilia/flagellum formation. In proliferating cells, MIB1-mediated ubiquitination induces its sequestration within centriolar satellites, precluding untimely cilia formation initiation. In contrast, during normal and ultraviolet or heat shock cellular stress-induced ciliogenesis, its non-ubiquitinated form is rapidly displaced from centriolar satellites and recruited to centrosome/basal bodies in a microtubule- and p38 MAPK-dependent manner. Also acts as a negative regulator of BBSome ciliary trafficking. Plays a role in sperm flagellar formation; may be involved in the regulation of intraflagellar transport (IFT) and/or intramanchette (IMT) trafficking, which are important for axoneme extension and/or cargo delivery to the nascent sperm tail. Required for optimal cell proliferation and cell cycle progression; may play a role in the regulation of genome stability and centriole duplication in non-ciliogenic cells. Involved in centriole duplication. Required for CEP152, WDR62 and CEP63 centrosomal localization and promotes the centrosomal localization of CDK2. Essential for maintaining proper centriolar satellite integrity. This is Centrosomal protein of 131 kDa (Cep131) from Mus musculus (Mouse).